We begin with the raw amino-acid sequence, 461 residues long: Glutamate-gated chloride channel alpha (461 aa).

Residues methionine 1–alanine 20 form the signal peptide. Residues glutamine 21–serine 275 are Extracellular-facing. Residues arginine 98, arginine 117, and serine 182 each contribute to the L-glutamate site. Cysteine 191 and cysteine 205 are oxidised to a cystine. Serine 211 provides a ligand contact to L-glutamate. N-linked (GlcNAc...) asparagine glycosylation is present at asparagine 246. Cysteine 252 and cysteine 263 are oxidised to a cystine. Residues phenylalanine 276–phenylalanine 298 form a helical membrane-spanning segment. The Cytoplasmic segment spans residues aspartate 299 to isoleucine 303. Residues proline 304–asparagine 325 form a helical membrane-spanning segment. Residues serine 326–serine 332 are Extracellular-facing. The chain crosses the membrane as a helical span at residues tyrosine 333 to leucine 353. At glutamate 354 to aspartate 432 the chain is on the cytoplasmic side. The helical transmembrane segment at leucine 433 to phenylalanine 454 threads the bilayer. Topologically, residues glycine 455–phenylalanine 461 are extracellular.

It belongs to the ligand-gated ion channel (TC 1.A.9) family. Glutamate-gated chloride channel (TC 1.A.9.4) subfamily. Pentamer. Homooligomer, forms functional heterooligomers with glc-2.

The protein resides in the postsynaptic cell membrane. It localises to the cell membrane. Functionally, glutamate-gated chloride channel subunit; channel properties depend on the subunit composition. Glutamate binding triggers a rapidly reversible current in heteromeric channels formed by glc-1 and glc-2, while the anti-helmintic drug ivermectin and other avermectins trigger a permanently open channel configuration. Channels containing only glc-1 are activated by ivermectin, but not by glutamate alone (in vitro). The heteromeric channel formed by glc-1 and glc-2 is also activated by ibotenate, and it is blocked by picrotoxin and flufenamic acid. Plays a role in the regulation of locomotor behavior. The polypeptide is Glutamate-gated chloride channel alpha (Caenorhabditis elegans).